The primary structure comprises 243 residues: Small ribosomal subunit protein uS5 (243 aa).

The segment at 1–54 (MSDNEKETQVAEETQNTQATAESSNNDERRGRRNNRGGEGRRGDRRGRREDNHE) is disordered. The span at 11–24 (AEETQNTQATAESS) shows a compositional bias: polar residues. A compositionally biased stretch (basic and acidic residues) spans 26–54 (NDERRGRRNNRGGEGRRGDRRGRREDNHE). Positions 57-120 (MLDRVVTINR…LDAKKHLFNV (64 aa)) constitute an S5 DRBM domain.

The protein belongs to the universal ribosomal protein uS5 family. Part of the 30S ribosomal subunit. Contacts proteins S4 and S8.

With S4 and S12 plays an important role in translational accuracy. In terms of biological role, located at the back of the 30S subunit body where it stabilizes the conformation of the head with respect to the body. This chain is Small ribosomal subunit protein uS5, found in Bifidobacterium animalis subsp. lactis (strain AD011).